The sequence spans 645 residues: Acetyl-coenzyme A synthetase (645 aa).

Residues 190-193 and Thr-308 each bind CoA; that span reads RGGR. ATP is bound by residues 384–386, 408–413, Asp-497, and Arg-512; these read GEP and DTWWQT. Ser-520 is a CoA binding site. An ATP-binding site is contributed by Arg-523. Val-534, His-536, and Val-539 together coordinate Mg(2+). The residue at position 606 (Lys-606) is an N6-acetyllysine.

It belongs to the ATP-dependent AMP-binding enzyme family. The cofactor is Mg(2+). Acetylated. Deacetylation by the SIR2-homolog deacetylase activates the enzyme.

The enzyme catalyses acetate + ATP + CoA = acetyl-CoA + AMP + diphosphate. Its function is as follows. Catalyzes the conversion of acetate into acetyl-CoA (AcCoA), an essential intermediate at the junction of anabolic and catabolic pathways. AcsA undergoes a two-step reaction. In the first half reaction, AcsA combines acetate with ATP to form acetyl-adenylate (AcAMP) intermediate. In the second half reaction, it can then transfer the acetyl group from AcAMP to the sulfhydryl group of CoA, forming the product AcCoA. This Alkalilimnicola ehrlichii (strain ATCC BAA-1101 / DSM 17681 / MLHE-1) protein is Acetyl-coenzyme A synthetase.